The sequence spans 106 residues: Large ribosomal subunit protein bL21 (106 aa).

This sequence belongs to the bacterial ribosomal protein bL21 family. In terms of assembly, part of the 50S ribosomal subunit. Contacts protein L20.

Its function is as follows. This protein binds to 23S rRNA in the presence of protein L20. The sequence is that of Large ribosomal subunit protein bL21 from Coprothermobacter proteolyticus (strain ATCC 35245 / DSM 5265 / OCM 4 / BT).